The following is a 121-amino-acid chain: Small ribosomal subunit protein bS6 (121 aa).

Residues 94-121 (KAETGPSAVMKRVEKEEARKSSQQETAA) are disordered. Over residues 104-115 (KRVEKEEARKSS) the composition is skewed to basic and acidic residues.

Belongs to the bacterial ribosomal protein bS6 family.

In terms of biological role, binds together with bS18 to 16S ribosomal RNA. The polypeptide is Small ribosomal subunit protein bS6 (Leptothrix cholodnii (strain ATCC 51168 / LMG 8142 / SP-6) (Leptothrix discophora (strain SP-6))).